A 223-amino-acid polypeptide reads, in one-letter code: Deoxyribose-phosphate aldolase (223 aa).

Aspartate 89 serves as the catalytic Proton donor/acceptor. Lysine 154 serves as the catalytic Schiff-base intermediate with acetaldehyde. The active-site Proton donor/acceptor is lysine 183.

This sequence belongs to the DeoC/FbaB aldolase family. DeoC type 1 subfamily.

The protein resides in the cytoplasm. It catalyses the reaction 2-deoxy-D-ribose 5-phosphate = D-glyceraldehyde 3-phosphate + acetaldehyde. It functions in the pathway carbohydrate degradation; 2-deoxy-D-ribose 1-phosphate degradation; D-glyceraldehyde 3-phosphate and acetaldehyde from 2-deoxy-alpha-D-ribose 1-phosphate: step 2/2. In terms of biological role, catalyzes a reversible aldol reaction between acetaldehyde and D-glyceraldehyde 3-phosphate to generate 2-deoxy-D-ribose 5-phosphate. The polypeptide is Deoxyribose-phosphate aldolase (Thermoanaerobacter pseudethanolicus (strain ATCC 33223 / 39E) (Clostridium thermohydrosulfuricum)).